The sequence spans 701 residues: Mediator of RNA polymerase II transcription subunit 25 (701 aa).

Disordered stretches follow at residues Ala-277–Gln-388 and Ala-580–Ala-617. Polar residues predominate over residues Ala-286–Pro-306. Low complexity-rich tracts occupy residues Pro-314–Gln-367 and Ala-593–Ala-604. The LXXLL motif motif lies at Leu-621–Leu-625. The tract at residues Ala-650–Ser-689 is disordered. Over residues Val-679 to Ser-689 the composition is skewed to polar residues.

Belongs to the Mediator complex subunit 25 family. As to quaternary structure, component of the Mediator complex.

The protein localises to the nucleus. In terms of biological role, component of the Mediator complex, a coactivator involved in the regulated transcription of nearly all RNA polymerase II-dependent genes. Mediator functions as a bridge to convey information from gene-specific regulatory proteins to the basal RNA polymerase II transcription machinery. Mediator is recruited to promoters by direct interactions with regulatory proteins and serves as a scaffold for the assembly of a functional preinitiation complex with RNA polymerase II and the general transcription factors. This Danio rerio (Zebrafish) protein is Mediator of RNA polymerase II transcription subunit 25 (med25).